We begin with the raw amino-acid sequence, 518 residues long: MKYKDLRDFIQRLEALGELRRVTQPVSPVLEMTELCDRVLRAGGPALLFNAPTGYDFPVLGNLFGTPRRVALGMGVDAGDDAALDSLRDLGRLLSALKEPDPPKSLKDAGKLLSLAKAVWDMAPKSVSSPPCQEIVWEGADVDLNRLPIQTCWPGDAGPLVTWGLTVTRGPNKSRQNLGIYRQQLIGRNKLIMRWLAHRGGALDFREFALQNPGKPYPVAVVLGADPATTLGAVTPVPDSLSEYQFAGLLRGSRTELAKCLTPGVDTLQVPARAEIVLEGFIYPQEGAPAPAPAGAPPRPAGNASAKYEHALEGPYGDHTGYYNEQEWFPVFTVERITMRRDAIYHSTYTGKPPDEPAVLGVALNEVFVPLLQKQFTEITDFYLPPEGCSYRMAIVQMKKSYAGHAKRVMFGVWSFLRQFMYTKFIVVVDEDVNIRDWKEVIWAITTRVDPVRDTVMVDSTPIDYLDFASPVAGLGSKMGLDATNKWPGETNREWGRPIEMDAAVKARVDRLWQEIGL.

Position 177 (N177) interacts with Mn(2+). Residues 180-182 (IYR), 194-196 (RWL), and 199-200 (RG) contribute to the prenylated FMN site. E243 contributes to the Mn(2+) binding site. D318 serves as the catalytic Proton donor.

This sequence belongs to the UbiD family. As to quaternary structure, homohexamer. It depends on prenylated FMN as a cofactor. The cofactor is Mn(2+).

It is found in the cell membrane. The catalysed reaction is a 4-hydroxy-3-(all-trans-polyprenyl)benzoate + H(+) = a 2-(all-trans-polyprenyl)phenol + CO2. The protein operates within cofactor biosynthesis; ubiquinone biosynthesis. In terms of biological role, catalyzes the decarboxylation of 3-octaprenyl-4-hydroxy benzoate to 2-octaprenylphenol, an intermediate step in ubiquinone biosynthesis. In Burkholderia lata (strain ATCC 17760 / DSM 23089 / LMG 22485 / NCIMB 9086 / R18194 / 383), this protein is 3-octaprenyl-4-hydroxybenzoate carboxy-lyase.